The primary structure comprises 150 residues: Lymphotoxin-beta (150 aa).

One can recognise a THD domain in the interval 1-149; it reads AWITGQGLGW…GKTFFGAVMV (149 aa). Asparagine 128 carries N-linked (GlcNAc...) asparagine glycosylation.

This sequence belongs to the tumor necrosis factor family. In terms of assembly, heterotrimer of either two LTB and one LTA subunits or (less prevalent) two LTA and one LTB subunits.

The protein localises to the membrane. Functionally, cytokine that binds to LTBR/TNFRSF3. May play a specific role in immune response regulation. Provides the membrane anchor for the attachment of the heterotrimeric complex to the cell surface. In Sus scrofa (Pig), this protein is Lymphotoxin-beta (LTB).